Reading from the N-terminus, the 179-residue chain is FAD-dependent monooxygenase nscC (179 aa).

The signal sequence occupies residues 1–21; that stretch reads MGKQQETILIIGAGISGLATS. Positions 35 and 46 each coordinate FAD. Residue Asn-92 is glycosylated (N-linked (GlcNAc...) asparagine). Arg-119 contributes to the FAD binding site. An N-linked (GlcNAc...) asparagine glycan is attached at Asn-170.

The protein belongs to the paxM FAD-dependent monooxygenase family. It depends on FAD as a cofactor.

The protein operates within secondary metabolite biosynthesis. Its function is as follows. FAD-dependent monooxygenase; part of the gene cluster that mediates the biosynthesis of neosartoricin B, a prenylated anthracenone that probably exhibits T-cell antiproliferative activity, suggestive of a physiological role as an immunosuppressive agent. The non-reducing polyketide synthase nscA probably synthesizes and cyclizes the decaketide backbone. The hydrolase nscB then mediates the product release through hydrolysis followed by spontaneous decarboxylation. The prenyltransferase nscD catalyzes the addition of the dimethylallyl group to the aromatic C5. The FAD-dependent monooxygenase nscC is then responsible for the stereospecific hydroxylation at C2. Neosartoricin B can be converted into two additional compounds neosartoricins C and D. Neosartoricin C is a spirocyclic compound that is cyclized through the attack of C3 hydroxyl on C14, followed by dehydration. On the other hand, neosartoricin D is a further cyclized compound in which attack of C2 on C14 in neosartoricin C results in the formation of the acetal-containing dioxabicyclo-octanone ring. Both of these compounds are novel and possibly represent related metabolites of the gene cluster. The polypeptide is FAD-dependent monooxygenase nscC (Trichophyton equinum (strain ATCC MYA-4606 / CBS 127.97) (Horse ringworm fungus)).